We begin with the raw amino-acid sequence, 1043 residues long: Unconventional myosin-Ia (1043 aa).

Positions 8-694 (VGVEDLVLLE…TLFYLEEQRR (687 aa)) constitute a Myosin motor domain. 101–108 (GESGAGKT) is a binding site for ATP. The interval 571–593 (VTTLMKNLYSKNPNYIRCIKPNE) is actin-binding. 3 IQ domains span residues 697–719 (LQQL…HYQL), 720–742 (MRKS…HYRK), and 743–772 (MKAS…SGAA). One can recognise a TH1 domain in the interval 858 to 1042 (KASYPQSVPI…KGSRCLEVTV (185 aa)).

It belongs to the TRAFAC class myosin-kinesin ATPase superfamily. Myosin family. In terms of processing, phosphorylated by ALPK1.

Functionally, involved in directing the movement of organelles along actin filaments. The chain is Unconventional myosin-Ia (MYO1A) from Bos taurus (Bovine).